A 347-amino-acid chain; its full sequence is NADH-ubiquinone oxidoreductase chain 2 (347 aa).

The next 10 membrane-spanning stretches (helical) occupy residues 1 to 21 (MNPLVFTMIMSTVMLGTAIVA), 25 to 45 (HWLMAWIGFEMNMLAVIPILM), 59 to 79 (YFLTQATASMLLMLAVTMNLV), 111 to 131 (FHFWVPEVTQGISLPSGLILL), 149 to 169 (INLDLLMMLINLSIAIGGWGG), 178 to 198 (IMAYSSIAHMGWMTAILTYNP), 201 to 221 (TLLNLMIYILLTTTTFMMFML), 237 to 257 (MPLLTTAILLTMLSLGGLPPL), 274 to 294 (NSVIMPTTMAVMALLNLYFYM), and 326 to 346 (LSPLIILSTLILPLSPMLALL).

Belongs to the complex I subunit 2 family. As to quaternary structure, core subunit of respiratory chain NADH dehydrogenase (Complex I) which is composed of 45 different subunits. Interacts with TMEM242.

The protein localises to the mitochondrion inner membrane. It catalyses the reaction a ubiquinone + NADH + 5 H(+)(in) = a ubiquinol + NAD(+) + 4 H(+)(out). Core subunit of the mitochondrial membrane respiratory chain NADH dehydrogenase (Complex I) which catalyzes electron transfer from NADH through the respiratory chain, using ubiquinone as an electron acceptor. Essential for the catalytic activity and assembly of complex I. In Pteropus rodricensis (Rodriguez flying fox), this protein is NADH-ubiquinone oxidoreductase chain 2.